The sequence spans 89 residues: Large ribosomal subunit protein bL27 (89 aa).

The tract at residues 1–24 (MAHKKAGGSSRNGRDSAGRRLGVK) is disordered.

It belongs to the bacterial ribosomal protein bL27 family.

This chain is Large ribosomal subunit protein bL27, found in Maricaulis maris (strain MCS10) (Caulobacter maris).